Consider the following 185-residue polypeptide: Calcium and integrin-binding family member 4 (185 aa).

EF-hand domains are found at residues 62–95 (RVNP…FSEQ), 97–132 (CPSL…LLKS), and 138–174 (DLLM…SPDF). D110, N112, N114, and D121 together coordinate Ca(2+).

Interacts with ITGA2B (via C-terminus cytoplasmic tail region); the interaction is stabilized/increased in a calcium- and magnesium-dependent manner. Expressed weakly in megakaryocytes and endothelial cells.

The protein is Calcium and integrin-binding family member 4 (Cib4) of Mus musculus (Mouse).